Consider the following 475-residue polypeptide: Glycogen synthase (475 aa).

ADP-alpha-D-glucose is bound at residue Lys15.

It belongs to the glycosyltransferase 1 family. Bacterial/plant glycogen synthase subfamily.

It catalyses the reaction [(1-&gt;4)-alpha-D-glucosyl](n) + ADP-alpha-D-glucose = [(1-&gt;4)-alpha-D-glucosyl](n+1) + ADP + H(+). Its pathway is glycan biosynthesis; glycogen biosynthesis. Functionally, synthesizes alpha-1,4-glucan chains using ADP-glucose. In Clostridium kluyveri (strain ATCC 8527 / DSM 555 / NBRC 12016 / NCIMB 10680 / K1), this protein is Glycogen synthase.